A 93-amino-acid polypeptide reads, in one-letter code: NADH-dependent phenylglyoxylate dehydrogenase subunit delta (93 aa).

2 consecutive 4Fe-4S ferredoxin-type domains span residues methionine 39–alanine 68 and histidine 66–arginine 93.

Dimer of heteropentamers composed of an alpha (PadG), a beta (PadI), a gamma (PadE), a delta (PadF) and an epsilon (PadH) subunit. The cofactor is [4Fe-4S] cluster.

The enzyme catalyses phenylglyoxylate + NAD(+) + CoA = benzoyl-CoA + CO2 + NADH. Its activity is regulated as follows. Activated by magnesium ions and thiamine diphosphate. Functionally, involved in the anaerobic metabolism of phenylalanine and phenylacetate. Catalyzes the oxidative decarboxylation of phenylglyoxylate to benzoyl-CoA and CO(2). It can also react slowly with 2-oxo-3-methylbutanoate and use different electron acceptors such as benzyl viologen, methyl viologen, FAD or FMN, but NAD seems to be the physiological electron acceptor. Also catalyzes an isotope exchange between CO(2) and the carboxyl group which proves partial or complete reversibility of the oxidative decarboxylation reaction. This is NADH-dependent phenylglyoxylate dehydrogenase subunit delta (padF) from Aromatoleum evansii (Azoarcus evansii).